The chain runs to 785 residues: Semaphorin-3F (785 aa).

Residues 1–18 (MLVTAFILWASLLTGAWP) form the signal peptide. The Sema domain occupies 31 to 545 (RVRLSFKELK…SAVGVTHLSL (515 aa)). Asn-53 carries N-linked (GlcNAc...) asparagine glycosylation. Cys-104 and Cys-115 are oxidised to a cystine. Asn-126 carries N-linked (GlcNAc...) asparagine glycosylation. Disulfide bonds link Cys-133-Cys-142, Cys-300-Cys-412, Cys-324-Cys-372, and Cys-548-Cys-566. The interval 583-602 (RSRRQDVRHGNPIRQCRGFN) is disordered. Residues 605–695 (ANKNAVESVQ…KHIVTRVQLH (91 aa)) enclose the Ig-like C2-type domain. A disulfide bridge links Cys-678 with Cys-746. Positions 753–785 (VPPRPREAPGALRPPELQDQKKPRNRRHHPPDT) are disordered. Positions 775-785 (PRNRRHHPPDT) are enriched in basic residues.

It belongs to the semaphorin family. In terms of tissue distribution, expressed ubiquitously in adulthood. During embryogenesis, expressed in subregions of the central nervous system and various other tissues like skin, kidney, lung and intestine.

It localises to the secreted. This chain is Semaphorin-3F (Sema3f), found in Mus musculus (Mouse).